The following is a 311-amino-acid chain: T-cell immunomodulatory protein (311 aa).

Residues N52, N70, and N181 are each glycosylated (N-linked (GlcNAc...) asparagine). The chain crosses the membrane as a helical span at residues 266 to 286 (VLLTAIALIGVCVFILAIIGI).

It belongs to the TIP family. As to quaternary structure, interacts with RUVBL1, RUVBL2 and alpha-tubulin.

It is found in the secreted. It localises to the cell membrane. In terms of biological role, modulator of T-cell function. Has a protective effect in graft versus host disease model. This Macaca fascicularis (Crab-eating macaque) protein is T-cell immunomodulatory protein.